A 519-amino-acid polypeptide reads, in one-letter code: Ribonuclease Y 1 (519 aa).

Residues 3-23 traverse the membrane as a helical segment; the sequence is VPIVILAIIAIVVGVVGGYYL. Residues 92–120 are compositionally biased toward basic and acidic residues; it reads QREETLDRKDNSLEKRENSLNRRDKKLSA. Positions 92–124 are disordered; it reads QREETLDRKDNSLEKRENSLNRRDKKLSAEEQN. One can recognise a KH domain in the interval 209–272; sequence TITVVTLPND…EVAKIALEKL (64 aa). The 94-residue stretch at 335–428 folds into the HD domain; the sequence is ALAHSIEVAK…VSTADIISAT (94 aa).

The protein belongs to the RNase Y family.

It is found in the cell membrane. In terms of biological role, endoribonuclease that initiates mRNA decay. In Levilactobacillus brevis (strain ATCC 367 / BCRC 12310 / CIP 105137 / JCM 1170 / LMG 11437 / NCIMB 947 / NCTC 947) (Lactobacillus brevis), this protein is Ribonuclease Y 1.